The sequence spans 754 residues: 5-methyltetrahydropteroyltriglutamate--homocysteine methyltransferase (754 aa).

Residues 17–20 and Lys-117 each bind 5-methyltetrahydropteroyltri-L-glutamate; that span reads RELK. L-homocysteine-binding positions include 431-433 and Glu-484; that span reads IGS. Residues 431 to 433 and Glu-484 contribute to the L-methionine site; that span reads IGS. 5-methyltetrahydropteroyltri-L-glutamate is bound by residues 515–516 and Trp-561; that span reads RC. An L-homocysteine-binding site is contributed by Asp-599. Residue Asp-599 participates in L-methionine binding. Glu-605 provides a ligand contact to 5-methyltetrahydropteroyltri-L-glutamate. Positions 641, 643, and 665 each coordinate Zn(2+). His-694 acts as the Proton donor in catalysis. Cys-726 is a Zn(2+) binding site.

It belongs to the vitamin-B12 independent methionine synthase family. Zn(2+) serves as cofactor.

It carries out the reaction 5-methyltetrahydropteroyltri-L-glutamate + L-homocysteine = tetrahydropteroyltri-L-glutamate + L-methionine. Its pathway is amino-acid biosynthesis; L-methionine biosynthesis via de novo pathway; L-methionine from L-homocysteine (MetE route): step 1/1. Catalyzes the transfer of a methyl group from 5-methyltetrahydrofolate to homocysteine resulting in methionine formation. In Salmonella enteritidis PT4 (strain P125109), this protein is 5-methyltetrahydropteroyltriglutamate--homocysteine methyltransferase.